We begin with the raw amino-acid sequence, 163 residues long: Secretory-abundant heat soluble protein 53582 (163 aa).

Positions Met-1–Ala-19 are cleaved as a signal peptide. The SAHS-c1 stretch occupies residues Glu-22–Pro-51. Residues Tyr-67–Glu-95 are SAHS-c2. Positions Lys-108–Arg-157 are SAHS-c3.

It belongs to the Secretory-abundant heat soluble protein (SAHS) family.

It localises to the secreted. Secreted heat soluble protein acting as a molecular shield in water-deficient condition. Tardigrade-specific intrinsically disordered proteins (TDPs) are essential for desiccation tolerance by forming non-crystalline amorphous solids upon desiccation, and this vitrified state mirrors their protective capabilities. The polypeptide is Secretory-abundant heat soluble protein 53582 (Hypsibius exemplaris (Freshwater tardigrade)).